A 330-amino-acid chain; its full sequence is NADH-quinone oxidoreductase subunit H (330 aa).

9 helical membrane passes run 5-25, 44-64, 78-98, 122-142, 156-176, 192-212, 240-260, 271-293, and 310-330; these read LFFI…IACL, IGPD…MIKL, FIFL…LAPI, VLYV…AGLA, VMGL…VIMI, IFGW…MASF, MRWA…SIVI, FWFV…FFLW, and CWKI…IALI.

Belongs to the complex I subunit 1 family. In terms of assembly, NDH-1 is composed of 14 different subunits. Subunits NuoA, H, J, K, L, M, N constitute the membrane sector of the complex.

The protein resides in the cell inner membrane. It carries out the reaction a quinone + NADH + 5 H(+)(in) = a quinol + NAD(+) + 4 H(+)(out). Functionally, NDH-1 shuttles electrons from NADH, via FMN and iron-sulfur (Fe-S) centers, to quinones in the respiratory chain. The immediate electron acceptor for the enzyme in this species is believed to be ubiquinone. Couples the redox reaction to proton translocation (for every two electrons transferred, four hydrogen ions are translocated across the cytoplasmic membrane), and thus conserves the redox energy in a proton gradient. This subunit may bind ubiquinone. This is NADH-quinone oxidoreductase subunit H from Campylobacter curvus (strain 525.92).